The sequence spans 57 residues: Thiocillin GE37468 (57 aa).

Positions 1 to 42 are cleaved as a propeptide — removed in mature form; sequence MGNNEEYFIDVNDLSIDVFDVVEQGGAVTALTADHGMPEVGA. Residues 43 to 44 constitute a cross-link (5-methyloxazole-4-carboxylic acid (Ser-Thr)); it reads ST. The segment at residues 43 to 52 is a cross-link (pyridine-2,5-dicarboxylic acid (Ser-Cys) (with S-53)); that stretch reads STNCFCYICC. The pyridine-2,5-dicarboxylic acid (Ser-Ser) (with C-52) cross-link spans 43 to 53; that stretch reads STNCFCYICCS. The thiazole-4-carboxylic acid (Asn-Cys) cross-link spans 45 to 46; the sequence is NC. The thiazoline-4-carboxylic acid (Phe-Cys) cross-link spans 47–48; it reads FC. Position 50 is a 5-hydroxy-3-methylproline (Ile) (Ile50). Residues 50–51 constitute a cross-link (thiazole-4-carboxylic acid (Ile-Cys)); it reads IC. The segment at residues 51 to 52 is a cross-link (thiazole-4-carboxylic acid (Cys-Cys)); that stretch reads CC. A cross-link (thiazole-4-carboxylic acid (Ser-Cys)) is located at residues 53–54; that stretch reads SC. Residues Ser55 and Ser56 each carry the 2,3-didehydroalanine (Ser) modification. Residue Asn57 is a propeptide, removed in mature form.

In terms of processing, maturation of thiazole and oxazole containing antibiotics involves the enzymatic condensation of a Cys, Ser or Thr with the alpha-carbonyl of the preceding amino acid to form a thioether or ether bond, then dehydration to form a double bond with the alpha-amino nitrogen. Thiazoline or oxazoline ring are dehydrogenated to form thiazole or oxazole rings. Maturation of pyridinyl containing antibiotics involves the cross-linking of a Ser and a Cys-Ser pair usually separated by 7 or 8 residues along the peptide chain. The Ser residues are dehydrated to didehydroalanines, then bonded between their beta carbons. The alpha carbonyl of the Cys condenses with alpha carbon of the first Ser to form a pyridinyl ring. The ring may be multiply dehydrogenated to form a pyridine ring with loss of the amino nitrogen of the first Ser.

It is found in the secreted. In terms of biological role, has bacteriocidal activity against both aerobic and anaerobic Gram-positive bacteria. Inhibits growth of B.subtilis (MIC=0.047 ug/ml) and methicillin-resistant S.aureus (MRSA) (MIC=0.047 ug/ml). Has poor activity against Gram-negative bacteria, with the exception of B.fragilis. Inhibits bacterial protein biosynthesis by acting on elongation factor Tu (EF-Tu). Full antibiotic activity depends on the presence of the modified residue Ile-50. This is Thiocillin GE37468 (getA) from Streptomyces sp.